A 150-amino-acid polypeptide reads, in one-letter code: Large ribosomal subunit protein eL19 (150 aa).

Residues 59–89 (SRYRARIRHEQKKKGRHRGPGSRKGKKTARM) are disordered. A compositionally biased stretch (basic residues) spans 61–89 (YRARIRHEQKKKGRHRGPGSRKGKKTARM).

Belongs to the eukaryotic ribosomal protein eL19 family. In terms of assembly, part of the 50S ribosomal subunit.

In terms of biological role, binds to the 23S rRNA. This Pyrococcus horikoshii (strain ATCC 700860 / DSM 12428 / JCM 9974 / NBRC 100139 / OT-3) protein is Large ribosomal subunit protein eL19.